We begin with the raw amino-acid sequence, 211 residues long: Holliday junction resolvase RecU (211 aa).

4 residues coordinate Mg(2+): T95, D97, E110, and Q129.

Belongs to the RecU family. The cofactor is Mg(2+).

It localises to the cytoplasm. It catalyses the reaction Endonucleolytic cleavage at a junction such as a reciprocal single-stranded crossover between two homologous DNA duplexes (Holliday junction).. In terms of biological role, endonuclease that resolves Holliday junction intermediates in genetic recombination. Cleaves mobile four-strand junctions by introducing symmetrical nicks in paired strands. Promotes annealing of linear ssDNA with homologous dsDNA. Required for DNA repair, homologous recombination and chromosome segregation. In Lactobacillus acidophilus (strain ATCC 700396 / NCK56 / N2 / NCFM), this protein is Holliday junction resolvase RecU.